Consider the following 828-residue polypeptide: Periplasmic nitrate reductase (828 aa).

A signal peptide (tat-type signal) is located at residues 1–31 (MKLSRRSFMKANAVAAAAAAAGLSVPGVARA). One can recognise a 4Fe-4S Mo/W bis-MGD-type domain in the interval 39–95 (IKWDKAPCRFCGTGCGVLVGTQQGRVVACQGDPDAPVNRGLNCIKGYFLPKIMYGKD). [4Fe-4S] cluster-binding residues include Cys-46, Cys-49, Cys-53, and Cys-81. Residues Lys-83, Gln-150, Asn-175, Cys-179, 212 to 219 (WGSNMAEM), 243 to 247 (STFQH), 262 to 264 (QSD), Met-372, Gln-376, Asn-482, 508 to 509 (SD), Lys-531, Asp-558, and 718 to 727 (TGRVLEHWHT) each bind Mo-bis(molybdopterin guanine dinucleotide). Phe-794 lines the substrate pocket. Mo-bis(molybdopterin guanine dinucleotide) contacts are provided by Asn-802 and Lys-819.

Belongs to the prokaryotic molybdopterin-containing oxidoreductase family. NasA/NapA/NarB subfamily. Component of the periplasmic nitrate reductase NapAB complex composed of NapA and NapB. Requires [4Fe-4S] cluster as cofactor. The cofactor is Mo-bis(molybdopterin guanine dinucleotide). Predicted to be exported by the Tat system. The position of the signal peptide cleavage has not been experimentally proven.

The protein localises to the periplasm. The catalysed reaction is 2 Fe(II)-[cytochrome] + nitrate + 2 H(+) = 2 Fe(III)-[cytochrome] + nitrite + H2O. Functionally, catalytic subunit of the periplasmic nitrate reductase complex NapAB. Receives electrons from NapB and catalyzes the reduction of nitrate to nitrite. The sequence is that of Periplasmic nitrate reductase from Salmonella arizonae (strain ATCC BAA-731 / CDC346-86 / RSK2980).